A 95-amino-acid chain; its full sequence is Aspartyl/glutamyl-tRNA(Asn/Gln) amidotransferase subunit C (95 aa).

Belongs to the GatC family. In terms of assembly, heterotrimer of A, B and C subunits.

It carries out the reaction L-glutamyl-tRNA(Gln) + L-glutamine + ATP + H2O = L-glutaminyl-tRNA(Gln) + L-glutamate + ADP + phosphate + H(+). It catalyses the reaction L-aspartyl-tRNA(Asn) + L-glutamine + ATP + H2O = L-asparaginyl-tRNA(Asn) + L-glutamate + ADP + phosphate + 2 H(+). Its function is as follows. Allows the formation of correctly charged Asn-tRNA(Asn) or Gln-tRNA(Gln) through the transamidation of misacylated Asp-tRNA(Asn) or Glu-tRNA(Gln) in organisms which lack either or both of asparaginyl-tRNA or glutaminyl-tRNA synthetases. The reaction takes place in the presence of glutamine and ATP through an activated phospho-Asp-tRNA(Asn) or phospho-Glu-tRNA(Gln). This Magnetococcus marinus (strain ATCC BAA-1437 / JCM 17883 / MC-1) protein is Aspartyl/glutamyl-tRNA(Asn/Gln) amidotransferase subunit C.